We begin with the raw amino-acid sequence, 143 residues long: Hypoxic response protein 1 (143 aa).

CBS domains follow at residues 8–65 (MNAG…GLDP) and 73–131 (LARD…IVQF). C14 and C39 are joined by a disulfide. Positions 97 and 122 each coordinate Zn(2+).

In terms of assembly, homodimer.

It localises to the secreted. Its function is as follows. Unlike some other CBS-domain containing proteins does not seem to bind AMP. The polypeptide is Hypoxic response protein 1 (hrp1) (Mycobacterium tuberculosis (strain CDC 1551 / Oshkosh)).